A 113-amino-acid polypeptide reads, in one-letter code: Ig kappa chain V-II region 17S29.1 (113 aa).

The tract at residues 1 to 23 (DIVMTQAVFSNPVTLGTSASISC) is framework-1. A disulfide bridge connects residues cysteine 23 and cysteine 93. The interval 24-39 (RSSKSLLHSNGITYLY) is complementarity-determining-1. The framework-2 stretch occupies residues 40–54 (WYLQKPGQSPQLLLY). The tract at residues 55–61 (QMSNLAS) is complementarity-determining-2. Positions 62 to 93 (GVPDRFSSSGSGTDFTLRISRVEAEDVGVYYC) are framework-3. The complementarity-determining-3 stretch occupies residues 94 to 102 (AHNLELPYT). The tract at residues 103 to 112 (FGGGTKLEIK) is framework-4.

Functionally, anti-streptococcal group A carbohydrate antibody. In Mus musculus (Mouse), this protein is Ig kappa chain V-II region 17S29.1.